The following is a 408-amino-acid chain: F-box A protein 155 (408 aa).

Residues 1-22 form a disordered region; that stretch reads MSDRGSDQSSSSSDSAQHIPPK.

Belongs to the FTH family.

The protein is F-box A protein 155 (fbxa-155) of Caenorhabditis elegans.